The following is a 488-amino-acid chain: MRAPLSTHDRCLVPDTYDIRLTITGNDGDKYPAKQHARRAAMKLGVSAGLVYLVGQPTINWGDSDQPRPFRQRRYFYYLSGVDEADCYLTYDIHSDLLTLYVPDFDLRHAIWMGPTLTIDEARHRYDVDRVCYFSSLQGHLESWIDKHNNSSPIYILHDTQKPHVPSRENVYLDGEHLLPAMDAARMVKDDYEIRMIRKANQISALAHRKVLENIHRMTNETEIEGLFLATCVSHGAKNQSYEIIAGSGKNAATLHYVKNNEPLHGRQLVCLDAGAEWDCYASDVTRTIPLGPDWASEYVRNIYCLVEKMQETCISQIRRGVTMKSLQDSAHFIAIQGLKDLGVLHDYDVLEIFHSGASAVFFPHGLGHHVGLEVHDVSVQPNAASAAAEGPRQTFFVPMATQSSPGLEPGMVVTIEPGVYFSELAIANARKQPLAKYINFDVAEKYIPIGGVRIEDDILVTHSGYENLTTAPKGEEMLEIIRRAIDN.

Aspartate 273, aspartate 284, glutamate 417, and glutamate 456 together coordinate Mn(2+).

This sequence belongs to the peptidase M24B family. Requires Mn(2+) as cofactor.

It catalyses the reaction Release of any N-terminal amino acid, including proline, that is linked to proline, even from a dipeptide or tripeptide.. Its function is as follows. Catalyzes the removal of a penultimate prolyl residue from the N-termini of peptides. The protein is Probable Xaa-Pro aminopeptidase ATEG_00858 of Aspergillus terreus (strain NIH 2624 / FGSC A1156).